A 181-amino-acid chain; its full sequence is Acetolactate synthase small subunit (181 aa).

Residues 4-78 (TLSVLVEDES…NVLKIQDITN (75 aa)) form the ACT domain.

It belongs to the acetolactate synthase small subunit family. In terms of assembly, dimer of large and small chains.

The protein resides in the plastid. It is found in the chloroplast. It carries out the reaction 2 pyruvate + H(+) = (2S)-2-acetolactate + CO2. It functions in the pathway amino-acid biosynthesis; L-isoleucine biosynthesis; L-isoleucine from 2-oxobutanoate: step 1/4. It participates in amino-acid biosynthesis; L-valine biosynthesis; L-valine from pyruvate: step 1/4. The polypeptide is Acetolactate synthase small subunit (ilvH) (Galdieria sulphuraria (Red alga)).